We begin with the raw amino-acid sequence, 39 residues long: Natriuretic peptide HsNP-a (39 aa).

The propeptide occupies 1–8 (SGSKTAKI). C12 and C28 are oxidised to a cystine.

The protein belongs to the natriuretic peptide family. Expressed by the venom gland.

Its subcellular location is the secreted. Functionally, snake venom natriuretic peptide that targets both NPR1 and NPR2. Exhibits hypotensive and vasodepressor activities. In Hoplocephalus stephensii (Stephens's banded snake), this protein is Natriuretic peptide HsNP-a.